A 103-amino-acid chain; its full sequence is Small ribosomal subunit protein uS10 (103 aa).

The protein belongs to the universal ribosomal protein uS10 family. In terms of assembly, part of the 30S ribosomal subunit.

Its function is as follows. Involved in the binding of tRNA to the ribosomes. The sequence is that of Small ribosomal subunit protein uS10 from Verminephrobacter eiseniae (strain EF01-2).